Consider the following 293-residue polypeptide: Formamidopyrimidine-DNA glycosylase (293 aa).

Catalysis depends on proline 2, which acts as the Schiff-base intermediate with DNA. Catalysis depends on glutamate 3, which acts as the Proton donor. Lysine 58 (proton donor; for beta-elimination activity) is an active-site residue. Histidine 104, arginine 127, and arginine 170 together coordinate DNA. The FPG-type zinc finger occupies 257-293; that stretch reads SVYGREGKPCRNPACGGTVERVVQSGRSTFFCASCQT. The Proton donor; for delta-elimination activity role is filled by arginine 283.

The protein belongs to the FPG family. In terms of assembly, monomer. The cofactor is Zn(2+).

It carries out the reaction Hydrolysis of DNA containing ring-opened 7-methylguanine residues, releasing 2,6-diamino-4-hydroxy-5-(N-methyl)formamidopyrimidine.. It catalyses the reaction 2'-deoxyribonucleotide-(2'-deoxyribose 5'-phosphate)-2'-deoxyribonucleotide-DNA = a 3'-end 2'-deoxyribonucleotide-(2,3-dehydro-2,3-deoxyribose 5'-phosphate)-DNA + a 5'-end 5'-phospho-2'-deoxyribonucleoside-DNA + H(+). In terms of biological role, involved in base excision repair of DNA damaged by oxidation or by mutagenic agents. Acts as a DNA glycosylase that recognizes and removes damaged bases. Has a preference for oxidized purines, such as 7,8-dihydro-8-oxoguanine (8-oxoG). Has AP (apurinic/apyrimidinic) lyase activity and introduces nicks in the DNA strand. Cleaves the DNA backbone by beta-delta elimination to generate a single-strand break at the site of the removed base with both 3'- and 5'-phosphates. The sequence is that of Formamidopyrimidine-DNA glycosylase from Brucella ovis (strain ATCC 25840 / 63/290 / NCTC 10512).